The following is a 926-amino-acid chain: Staphylococcal nuclease domain-containing protein 1 (926 aa).

Low complexity predominate over residues 1–17; sequence MATAANTATAAGAAKDA. A disordered region spans residues 1-24; it reads MATAANTATAAGAAKDAPPAPTKS. 4 TNase-like domains span residues 23–167, 195–333, 346–505, and 535–674; these read KSLS…KWSP, NPVK…QWQD, KDFS…LHAK, and LRTE…IWTN. A Tudor domain is found at 749–807; it reads TPKRGDLVAAQFTLDNQWYRAKVERVQGSNATVLYIDYGNKETLPTNRLAALPPAFSSE. The interval 760-788 is involved in dimethylarginine binding; sequence FTLDNQWYRAKVERVQGSNATVLYIDYGN.

In terms of assembly, associates with the RNA-induced silencing complex (RISC). Interacts with the RISC components AGO2, Fmr1 and vig. Interacts with piwi. In terms of tissue distribution, expressed in adult ovaries and testis (at protein level).

The protein localises to the cytoplasm. Its subcellular location is the nucleus. It catalyses the reaction Endonucleolytic cleavage to nucleoside 3'-phosphates and 3'-phosphooligonucleotide end-products.. Endonuclease which shows activity towards both DNA and RNA substrates. Has a role in translation regulation throught its association with the with the RNA-induced silencing complex (RISC). Plays a role in spermatogenesis probably by negatively regulating piwi expression in the germline. Together with piwi, might be involved in transposon repression in the germline. The polypeptide is Staphylococcal nuclease domain-containing protein 1 (Drosophila melanogaster (Fruit fly)).